The sequence spans 190 residues: MFAGRLMVRSIVGRACLATMGRWSKPQAHASQVILPSTPAIAAVAIQCEEFTANRRLFSSQIETESTLDGATYERVCSDTLDALCDYFEELTENASELQGTDVAYSDGVLTVNLGGQHGTYVINRQTPNKQIWLSSPTSGPKRYDFVGTVAAGRWIYKHSGQSLHELLQQEIPGILKSQSVDFLRLPYCS.

It belongs to the frataxin family. In terms of assembly, monomer (probable predominant form). Oligomer. Interacts with IscU. Component of the mitochondrial core iron-sulfur cluster (ISC) assembly complex at least composed of the cysteine desulfurase Nfs1, the scaffold protein IscU, the accessory protein bcn92/Isd11/Lyrm4, and probably fh/frataxin.

Its subcellular location is the mitochondrion. It carries out the reaction 4 Fe(2+) + O2 + 4 H(+) = 4 Fe(3+) + 2 H2O. Functionally, promotes the biosynthesis of heme as well as the assembly and repair of iron-sulfur clusters by delivering Fe(2+) to proteins involved in these pathways. May play a role in the protection against iron-catalyzed oxidative stress through its ability to catalyze the oxidation of Fe(2+) to Fe(3+). May be able to store large amounts of the metal in the form of a ferrihydrite mineral by oligomerization. Required for ecdysteroidogenesis in the prothoracic gland which is necessary for larval to pupal transition. The polypeptide is Frataxin homolog, mitochondrial (Drosophila melanogaster (Fruit fly)).